A 140-amino-acid chain; its full sequence is Ribonuclease P protein component (140 aa).

The interval Arg33–Ala54 is disordered.

It belongs to the RnpA family. Consists of a catalytic RNA component (M1 or rnpB) and a protein subunit.

It catalyses the reaction Endonucleolytic cleavage of RNA, removing 5'-extranucleotides from tRNA precursor.. In terms of biological role, RNaseP catalyzes the removal of the 5'-leader sequence from pre-tRNA to produce the mature 5'-terminus. It can also cleave other RNA substrates such as 4.5S RNA. The protein component plays an auxiliary but essential role in vivo by binding to the 5'-leader sequence and broadening the substrate specificity of the ribozyme. The sequence is that of Ribonuclease P protein component from Trichormus variabilis (strain ATCC 29413 / PCC 7937) (Anabaena variabilis).